A 693-amino-acid chain; its full sequence is Protein arginine N-methyltransferase 7 (693 aa).

2 SAM-dependent MTase PRMT-type domains span residues 14 to 345 (SLEW…YCVW) and 358 to 684 (SAYQ…ITME). Arg32 is subject to Omega-N-methylarginine. Residues Glu144 and Glu153 contribute to the active site.

This sequence belongs to the class I-like SAM-binding methyltransferase superfamily. Protein arginine N-methyltransferase family. PRMT7 subfamily. Homodimer and heterodimer. Interacts with CTCFL, PRMT5 and SNRPD3.

It is found in the cytoplasm. Its subcellular location is the cytosol. The protein localises to the nucleus. It catalyses the reaction L-arginyl-[protein] + S-adenosyl-L-methionine = N(omega)-methyl-L-arginyl-[protein] + S-adenosyl-L-homocysteine + H(+). Its function is as follows. Arginine methyltransferase that can both catalyze the formation of omega-N monomethylarginine (MMA) and symmetrical dimethylarginine (sDMA), with a preference for the formation of MMA. Specifically mediates the symmetrical dimethylation of arginine residues in the small nuclear ribonucleoproteins Sm D1 (SNRPD1) and Sm D3 (SNRPD3); such methylation being required for the assembly and biogenesis of snRNP core particles. Specifically mediates the symmetric dimethylation of histone H4 'Arg-3' to form H4R3me2s. Plays a role in gene imprinting by being recruited by CTCFL at the H19 imprinted control region (ICR) and methylating histone H4 to form H4R3me2s, possibly leading to recruit DNA methyltransferases at these sites. May also play a role in embryonic stem cell (ESC) pluripotency. Also able to mediate the arginine methylation of histone H2A and myelin basic protein (MBP) in vitro; the relevance of such results is however unclear in vivo. The polypeptide is Protein arginine N-methyltransferase 7 (Prmt7) (Rattus norvegicus (Rat)).